A 362-amino-acid polypeptide reads, in one-letter code: Ferredoxin--NADP reductase, leaf isozyme 1, chloroplastic (362 aa).

Residues 1 to 36 (MAAVTAAAVSTSAAAAVTKASPSPAHCFLPCPPRTR) constitute a chloroplast transit peptide. An FAD-binding FR-type domain is found at 83 to 205 (KEPYVGKCLL…TGPVGKEMLM (123 aa)). Residues 141–144 (RLYS), 162–164 (CVK), Tyr-168, 179–181 (VCS), and Thr-220 contribute to the FAD site. Residues Ser-144 and Lys-164 each coordinate NADP(+). A disulfide bond links Cys-180 and Cys-185. Ser-181 carries the post-translational modification Phosphoserine. Residues Thr-220, 252 to 253 (VP), 282 to 283 (SR), Lys-292, 321 to 322 (GL), and Glu-360 contribute to the NADP(+) site.

The protein belongs to the ferredoxin--NADP reductase type 1 family. In terms of assembly, heterodimer with LFNR2. Component of high molecular weight thylakoid LFNRs-containing protein complexes containing LIR1, LFNR1, LFNR2, TIC62 and TROL proteins. Interacts directly with LFNR1 and LFNR2; LIR1 increases the affinity of LFNR1 and LFNR2 for TIC62 and subsequent thylakoid relocalization. The cofactor is FAD. May form interchain disulfide bonds with LIR1.

Its subcellular location is the plastid. The protein resides in the chloroplast stroma. It is found in the chloroplast thylakoid membrane. The catalysed reaction is 2 reduced [2Fe-2S]-[ferredoxin] + NADP(+) + H(+) = 2 oxidized [2Fe-2S]-[ferredoxin] + NADPH. Its pathway is energy metabolism; photosynthesis. Its function is as follows. Plays a key role in regulating the relative amounts of cyclic and non-cyclic electron flow to meet the demands of the plant for ATP and reducing power. This chain is Ferredoxin--NADP reductase, leaf isozyme 1, chloroplastic, found in Oryza sativa subsp. indica (Rice).